Reading from the N-terminus, the 527-residue chain is Zinc finger C2HC domain-containing protein 1C (527 aa).

Disordered stretches follow at residues 18-105 (HNKT…GQGK) and 145-170 (VHRKSHSTSDAGADGDQNGYPRLPDS). The span at 50 to 61 (NSFQSKLWSNTE) shows a compositional bias: polar residues. The span at 71–85 (RPKRNVCTKARRHSC) shows a compositional bias: basic residues. Over residues 93–102 (QQGSGNNAQG) the composition is skewed to low complexity. Residues 207-254 (TQIQRLEAAGESLQKEIRRKEILLQEKLKKTEEGLRRMQKEKKQAIFQ) are a coiled coil. 2 disordered regions span residues 264 to 316 (LPRR…LSDY) and 352 to 379 (LGSTLQESSRSGTPGSSGSSSSTEEPEL). Basic and acidic residues predominate over residues 286–298 (FRSEVFSRNRGED). The segment covering 301 to 312 (CDQAQENPSPRQ) has biased composition (polar residues). Residues 358-374 (ESSRSGTPGSSGSSSST) are compositionally biased toward low complexity. 2 C2HC/C3H-type zinc fingers span residues 378–407 (ELAKCSHCGRSFLSLRLQRHSTVCGKMQGS) and 489–518 (DYVQCPHCSRHFAPKVAERHIPKCKTIKNR). Zn(2+) is bound by residues Cys-382, Cys-385, His-397, Cys-401, Cys-493, Cys-496, His-508, and Cys-512. A disordered region spans residues 507–527 (RHIPKCKTIKNRPPPPRRHDS).

Belongs to the ZC2HC1 family. Requires Zn(2+) as cofactor.

The chain is Zinc finger C2HC domain-containing protein 1C (Zc2hc1c) from Mus musculus (Mouse).